Consider the following 345-residue polypeptide: RNA polymerase II holoenzyme cyclin-like subunit (345 aa).

A Cyclin N-terminal domain is found at 23-147; sequence ESRRKLLLLE…KLAEFEFYLI (125 aa).

The protein belongs to the cyclin family. Cyclin C subfamily. In terms of assembly, component of the SRB8-11 complex, a regulatory module of the Mediator complex.

Its subcellular location is the nucleus. In terms of biological role, component of the SRB8-11 complex. The SRB8-11 complex is a regulatory module of the Mediator complex which is itself involved in regulation of basal and activated RNA polymerase II-dependent transcription. The SRB8-11 complex may be involved in the transcriptional repression of a subset of genes regulated by Mediator. It may inhibit the association of the Mediator complex with RNA polymerase II to form the holoenzyme complex. The SRB8-11 complex phosphorylates the C-terminal domain (CTD) of the largest subunit of RNA polymerase II. This is RNA polymerase II holoenzyme cyclin-like subunit (SSN8) from Debaryomyces hansenii (strain ATCC 36239 / CBS 767 / BCRC 21394 / JCM 1990 / NBRC 0083 / IGC 2968) (Yeast).